We begin with the raw amino-acid sequence, 885 residues long: Dipeptidyl peptidase 9 (885 aa).

Active-site charge relay system residues include serine 752, aspartate 830, and histidine 862. Serine 752 contributes to the Val-boroPro binding site.

The protein belongs to the peptidase S9B family. DPPIV subfamily. As to quaternary structure, homodimer. Forms a ternary complex with NLRP1, composed of a DPP9 homodimer, one full-length NLRP1 protein, and one cleaved C-terminus of NLRP1 (NACHT, LRR and PYD domains-containing protein 1, C-terminus).

It localises to the nucleus. The catalysed reaction is Release of an N-terminal dipeptide, Xaa-Yaa-|-Zaa-, from a polypeptide, preferentially when Yaa is Pro, provided Zaa is neither Pro nor hydroxyproline.. In terms of biological role, dipeptidyl peptidase that cleaves off N-terminal dipeptides from proteins having a Pro or Ala residue at position 2. Acts as a key inhibitor of the NLRP1 inflammasome. This chain is Dipeptidyl peptidase 9, found in Danio rerio (Zebrafish).